A 232-amino-acid chain; its full sequence is CMP-N,N'-diacetyllegionaminic acid synthase (232 aa).

It belongs to the CMP-NeuNAc synthase family.

It catalyses the reaction N,N-diacetyllegionaminate + CTP = CMP-N,N-diacetyllegionaminate + diphosphate. Involved in biosynthesis of legionaminic acid (5,7-diamino-3,5,7,9-tetradeoxy-D-glycero-D-galacto-non-2-ulosonic acid)(Leg), a sialic acid-like derivative that is incorporated into virulence-associated cell surface glycoconjugates such as lipopolysaccharide (LPS) which could be a key determinant in the ability of L.pneumophila to inhibit the fusion of phagosomes with lysosomes. LPS contains a majority alpha2,4-linked homomer of legionaminic acid. Catalyzes the conversion of N,N'-diacetyllegionaminic acid (Leg5Ac7Ac) and CTP into CMP-N,N'-diacetyllegionaminic acid (CMP-Leg5Ac7Ac). This Legionella pneumophila subsp. pneumophila (strain Philadelphia 1 / ATCC 33152 / DSM 7513) protein is CMP-N,N'-diacetyllegionaminic acid synthase (neuA).